The primary structure comprises 49 residues: MRVKVTLACTECKQRNYNTTKNKKNNPDRIELQKYCRFCKKHTTHKETK.

The protein belongs to the bacterial ribosomal protein bL33 family.

This Clostridioides difficile (strain 630) (Peptoclostridium difficile) protein is Large ribosomal subunit protein bL33.